The chain runs to 95 residues: uncharacterized protein (95 aa).

The first 21 residues, 1–21 (MKKITLFFTALLCLFSTSVLA), serve as a signal peptide directing secretion.

This is an uncharacterized protein from Haemophilus influenzae (strain ATCC 51907 / DSM 11121 / KW20 / Rd).